The chain runs to 593 residues: UvrABC system protein C (593 aa).

A GIY-YIG domain is found at D14–I91. Residues N196 to L231 enclose the UVR domain.

It belongs to the UvrC family. Interacts with UvrB in an incision complex.

It localises to the cytoplasm. In terms of biological role, the UvrABC repair system catalyzes the recognition and processing of DNA lesions. UvrC both incises the 5' and 3' sides of the lesion. The N-terminal half is responsible for the 3' incision and the C-terminal half is responsible for the 5' incision. This chain is UvrABC system protein C, found in Streptococcus agalactiae serotype V (strain ATCC BAA-611 / 2603 V/R).